A 185-amino-acid chain; its full sequence is MKCIVGLGNPGAKYTNTRHNIGFLAIDALAKEHGIKLTESKFKAVFGTGMIKGERVVLVKPLTYMNLSGEAVRPLLDFYKIAVEDVLVIYDDLDLPLEKMRLRSKGSAGGHNGVKSLIQHLGTQDIKRLKLGVGRPPAPIQVIDWVLMPFAKSEQTTLQHVLSDSVNIATDFIDTPFLALMNRYN.

A tRNA-binding site is contributed by Tyr14. Residue His19 is the Proton acceptor of the active site. Positions 64, 66, and 112 each coordinate tRNA.

It belongs to the PTH family. As to quaternary structure, monomer.

Its subcellular location is the cytoplasm. The catalysed reaction is an N-acyl-L-alpha-aminoacyl-tRNA + H2O = an N-acyl-L-amino acid + a tRNA + H(+). Hydrolyzes ribosome-free peptidyl-tRNAs (with 1 or more amino acids incorporated), which drop off the ribosome during protein synthesis, or as a result of ribosome stalling. Its function is as follows. Catalyzes the release of premature peptidyl moieties from peptidyl-tRNA molecules trapped in stalled 50S ribosomal subunits, and thus maintains levels of free tRNAs and 50S ribosomes. The polypeptide is Peptidyl-tRNA hydrolase (Exiguobacterium sibiricum (strain DSM 17290 / CCUG 55495 / CIP 109462 / JCM 13490 / 255-15)).